The sequence spans 459 residues: UDP-N-acetylmuramate--L-alanine ligase (459 aa).

Position 118–124 (118–124) interacts with ATP; it reads GTHGKTT.

This sequence belongs to the MurCDEF family.

It is found in the cytoplasm. The enzyme catalyses UDP-N-acetyl-alpha-D-muramate + L-alanine + ATP = UDP-N-acetyl-alpha-D-muramoyl-L-alanine + ADP + phosphate + H(+). It functions in the pathway cell wall biogenesis; peptidoglycan biosynthesis. Cell wall formation. The protein is UDP-N-acetylmuramate--L-alanine ligase of Lachnospira eligens (strain ATCC 27750 / DSM 3376 / VPI C15-48 / C15-B4) (Eubacterium eligens).